A 192-amino-acid chain; its full sequence is Fe/S biogenesis protein NfuA (192 aa).

Residues C149 and C152 each contribute to the [4Fe-4S] cluster site.

It belongs to the NfuA family. Homodimer. Requires [4Fe-4S] cluster as cofactor.

In terms of biological role, involved in iron-sulfur cluster biogenesis. Binds a 4Fe-4S cluster, can transfer this cluster to apoproteins, and thereby intervenes in the maturation of Fe/S proteins. Could also act as a scaffold/chaperone for damaged Fe/S proteins. In Shewanella denitrificans (strain OS217 / ATCC BAA-1090 / DSM 15013), this protein is Fe/S biogenesis protein NfuA.